A 476-amino-acid chain; its full sequence is Glycogen synthase (476 aa).

Position 15 (K15) interacts with ADP-alpha-D-glucose.

The protein belongs to the glycosyltransferase 1 family. Bacterial/plant glycogen synthase subfamily.

The catalysed reaction is [(1-&gt;4)-alpha-D-glucosyl](n) + ADP-alpha-D-glucose = [(1-&gt;4)-alpha-D-glucosyl](n+1) + ADP + H(+). Its pathway is glycan biosynthesis; glycogen biosynthesis. Its function is as follows. Synthesizes alpha-1,4-glucan chains using ADP-glucose. This is Glycogen synthase from Haemophilus influenzae (strain PittEE).